Consider the following 599-residue polypeptide: Kinesin light chain 2 (599 aa).

Residues 78–143 (ILALSSHLGA…KQHLLFMSQI (66 aa)) adopt a coiled-coil conformation. Residues 154–163 (EKGDVPKDSL) show a composition bias toward basic and acidic residues. A disordered region spans residues 154-188 (EKGDVPKDSLDDLFPNEDEQSPAPSPGGGDVAAQH). Phosphoserine is present on residues Ser-174 and Ser-178. TPR repeat units follow at residues 197-230 (LRTL…LEKT), 239-272 (ATML…REKT), 281-314 (AATL…REKV), 323-356 (AKQL…YATR), and 365-398 (AKTK…AHEK). Ser-443 carries the phosphoserine modification. Residues 447-480 (NTTLRTLGALYRPEGKLEAAHTLEDCASRSRKQG) form a TPR 6 repeat. The interval 492–541 (LLKDGSGRGHRRGSRDVAGPQSESDLEESGPAAEWSGDGSGSLRRSGSFG) is disordered. A phosphoserine mark is found at Ser-505 and Ser-515. A compositionally biased stretch (low complexity) spans 532–541 (GSLRRSGSFG). Phosphoserine occurs at positions 574, 575, and 582.

It belongs to the kinesin light chain family. As to quaternary structure, oligomeric complex composed of two heavy chains and two light chains. Interacts (via TPR repeats) with PLEKHM2.

It is found in the cytoplasm. The protein resides in the cytoskeleton. It localises to the lysosome membrane. Its function is as follows. Kinesin is a microtubule-associated force-producing protein that plays a role in organelle transport. The light chain functions in coupling of cargo to the heavy chain or in the modulation of its ATPase activity. Through binding with PLEKHM2 and ARL8B, recruits kinesin-1 to lysosomes and hence direct lysosomes movement toward microtubule plus ends. The polypeptide is Kinesin light chain 2 (Mus musculus (Mouse)).